The sequence spans 130 residues: Small ribosomal subunit protein uS9 (130 aa).

This sequence belongs to the universal ribosomal protein uS9 family.

The sequence is that of Small ribosomal subunit protein uS9 from Nitrosomonas eutropha (strain DSM 101675 / C91 / Nm57).